Here is a 66-residue protein sequence, read N- to C-terminus: uncharacterized protein (66 aa).

The tract at residues 1 to 20 (MIALAYLATVAIAAMVLAVA) is hydrophobic.

This is an uncharacterized protein from Streptomyces lividans.